Reading from the N-terminus, the 598-residue chain is Probable translation initiation factor IF-2 (598 aa).

The 219-residue stretch at 8–226 (IRQPIISVLG…VTGLAQRFLE (219 aa)) folds into the tr-type G domain. A G1 region spans residues 17–24 (GHVDHGKT). 17 to 24 (GHVDHGKT) is a GTP binding site. The G2 stretch occupies residues 42–46 (GITQH). The interval 81–84 (DTPG) is G3. GTP-binding positions include 81-85 (DTPGH) and 135-138 (NKVD). The tract at residues 135-138 (NKVD) is G4. The interval 203 to 205 (SGV) is G5.

The protein belongs to the TRAFAC class translation factor GTPase superfamily. Classic translation factor GTPase family. IF-2 subfamily.

Function in general translation initiation by promoting the binding of the formylmethionine-tRNA to ribosomes. Seems to function along with eIF-2. In Methanopyrus kandleri (strain AV19 / DSM 6324 / JCM 9639 / NBRC 100938), this protein is Probable translation initiation factor IF-2.